The chain runs to 283 residues: Ribonuclease P protein subunit p38 (283 aa).

An N-acetylalanine modification is found at alanine 2. Residues serine 12, serine 226, and serine 235 each carry the phosphoserine modification.

The protein belongs to the eukaryotic ribosomal protein eL8 family. Component of nuclear RNase P and RNase MRP ribonucleoproteins. RNase P consists of a catalytic RNA moiety and about 10 protein subunits; POP1, POP4, POP5, POP7, RPP14, RPP21, RPP25, RPP30, RPP38 and RPP40. Within the RNase P complex, POP1, POP7 and RPP25 form the 'finger' subcomplex, POP5, RPP14, RPP40 and homodimeric RPP30 form the 'palm' subcomplex, and RPP21, POP4 and RPP38 form the 'wrist' subcomplex. All subunits of the RNase P complex interact with the catalytic RNA. Several subunits of RNase P are also part of the RNase MRP complex. RNase MRP consists of a catalytic RNA moiety and about 8 protein subunits; POP1, POP7, RPP25, RPP30, RPP38, RPP40 and possibly also POP4 and POP5.

It localises to the nucleus. Its subcellular location is the nucleolus. In terms of biological role, component of ribonuclease P, a ribonucleoprotein complex that generates mature tRNA molecules by cleaving their 5'-ends. Also a component of the MRP ribonuclease complex, which cleaves pre-rRNA sequences. The sequence is that of Ribonuclease P protein subunit p38 (RPP38) from Homo sapiens (Human).